The following is a 169-amino-acid chain: Phycobiliprotein beta chain (169 aa).

Asn72 carries the post-translational modification N4-methylasparagine. Cys82 is a binding site for (2R,3E)-phycocyanobilin.

Belongs to the phycobiliprotein family. In terms of assembly, heterodimer of an alpha and a beta chain. Post-translationally, contains one covalently linked bilin chromophore.

It localises to the cellular thylakoid membrane. Functionally, light-harvesting photosynthetic bile pigment-protein from the phycobiliprotein complex. This is a protein functionally equivalent to, but with weaker absorbance than, allophycocyanin beta chain. This Mastigocladus laminosus (Fischerella sp.) protein is Phycobiliprotein beta chain (apcD).